The chain runs to 199 residues: Insertion sequence IS21-like putative ATP-binding protein (199 aa).

114–121 (GDSGTGKT) serves as a coordination point for ATP.

This sequence belongs to the IS21/IS1162 putative ATP-binding protein family.

This is Insertion sequence IS21-like putative ATP-binding protein (tnpB) from Bacteroides fragilis (strain YCH46).